A 128-amino-acid polypeptide reads, in one-letter code: Sulfurtransferase TusD (128 aa).

The active-site Cysteine persulfide intermediate is C78.

This sequence belongs to the DsrE/TusD family. Heterohexamer, formed by a dimer of trimers. The hexameric TusBCD complex contains 2 copies each of TusB, TusC and TusD. The TusBCD complex interacts with TusE.

It localises to the cytoplasm. Part of a sulfur-relay system required for 2-thiolation of 5-methylaminomethyl-2-thiouridine (mnm(5)s(2)U) at tRNA wobble positions. Accepts sulfur from TusA and transfers it in turn to TusE. The polypeptide is Sulfurtransferase TusD (Escherichia coli O45:K1 (strain S88 / ExPEC)).